The sequence spans 285 residues: Phospholipid phosphatase 1 (285 aa).

Residues 1–6 (MFDKTR) are Cytoplasmic-facing. Residues 5–7 (TRL) carry the PDZ-binding; involved in localization to the apical cell membrane motif. The helical transmembrane segment at 7-27 (LPYVALDVLCVLLAGLPFAIL) threads the bilayer. Residues 28–53 (TSRHTPFQRGLFCNDESIKYPYKEDT) are Extracellular-facing. Residues 54-74 (IPYPLLGGIIIPFSIIVMIVG) traverse the membrane as a helical segment. Residues 75–94 (ETLSVYFNLLHSNSFIRNNY) lie on the Cytoplasmic side of the membrane. Residues 95–115 (IATIYKAIGTFLFGAAASQSL) form a helical membrane-spanning segment. The Extracellular portion of the chain corresponds to 116-164 (TDIAKYSIGRLRPHFLDVCDPDWSKINCSDGYIENYICRGNAQKVKEGR). Positions 120-128 (KYSIGRLRP) are phosphatase sequence motif I. N142 carries N-linked (GlcNAc...) asparagine glycosylation. Residues 165 to 185 (LSFYSGHSSFSMYCMLFVALY) form a helical membrane-spanning segment. The tract at residues 168-171 (YSGH) is phosphatase sequence motif II. The active-site Proton donors is the H171. Residues 186 to 196 (LQARMKGDWAR) are Cytoplasmic-facing. A helical transmembrane segment spans residues 197–216 (LLRPTLQFGLVAVSIYVGLS). The tract at residues 216-227 (SRVSDYKHHWSD) is phosphatase sequence motif III. Residues 217–229 (RVSDYKHHWSDVL) are Extracellular-facing. The Nucleophile role is filled by H223. A helical transmembrane segment spans residues 230-250 (TGLIQGALVAIVVAVYVSDFF). The Cytoplasmic segment spans residues 251-285 (KERNSPFKERKEEDSHTTLHETPTTGNHYRNSHQP). The span at 257–269 (FKERKEEDSHTTL) shows a compositional bias: basic and acidic residues. Positions 257–285 (FKERKEEDSHTTLHETPTTGNHYRNSHQP) are disordered. Over residues 270–285 (HETPTTGNHYRNSHQP) the composition is skewed to polar residues.

It belongs to the PA-phosphatase related phosphoesterase family. In terms of assembly, forms functional homodimers and homooligomers that are not required for substrate recognition and catalytic activity. Can also form heterooligomers with PLPP2 and PLPP3. N-glycosylated. N-linked sugars are of the complex type. N-glycosylation is not required for the phosphatase activity.

Its subcellular location is the cell membrane. The protein localises to the apical cell membrane. The protein resides in the membrane raft. It localises to the membrane. It is found in the caveola. The enzyme catalyses a 1,2-diacyl-sn-glycero-3-phosphate + H2O = a 1,2-diacyl-sn-glycerol + phosphate. It catalyses the reaction 1,2-dihexadecanoyl-sn-glycero-3-phosphate + H2O = 1,2-dihexadecanoyl-sn-glycerol + phosphate. It carries out the reaction 1,2-di-(9Z-octadecenoyl)-sn-glycero-3-phosphate + H2O = 1,2-di-(9Z-octadecenoyl)-sn-glycerol + phosphate. The catalysed reaction is a monoacyl-sn-glycero-3-phosphate + H2O = a monoacylglycerol + phosphate. The enzyme catalyses (9Z)-octadecenoyl-sn-glycero-3-phosphate + H2O = (9Z-octadecenoyl)-glycerol + phosphate. It catalyses the reaction a 1-acyl-sn-glycero-3-phosphate + H2O = a 1-acyl-sn-glycerol + phosphate. It carries out the reaction 1-(9Z-octadecenoyl)-sn-glycero-3-phosphate + H2O = 1-(9Z-octadecenoyl)-sn-glycerol + phosphate. The catalysed reaction is a 1,2-diacyl-sn-glycerol 3-diphosphate + H2O = a 1,2-diacyl-sn-glycero-3-phosphate + phosphate + H(+). The enzyme catalyses sphing-4-enine 1-phosphate + H2O = sphing-4-enine + phosphate. It catalyses the reaction an N-acylsphing-4-enine 1-phosphate + H2O = an N-acylsphing-4-enine + phosphate. It carries out the reaction N-(octanoyl)-sphing-4-enine-1-phosphate + H2O = N-octanoylsphing-4-enine + phosphate. The catalysed reaction is N-(9Z-octadecenoyl)-ethanolamine phosphate + H2O = N-(9Z-octadecenoyl) ethanolamine + phosphate. The enzyme catalyses 1-hexadecanoyl-2-(9Z-octadecenoyl)-sn-glycero-3-phosphate + H2O = 1-hexadecanoyl-2-(9Z-octadecenoyl)-sn-glycerol + phosphate. The protein operates within lipid metabolism; phospholipid metabolism. With respect to regulation, magnesium-independent phospholipid phosphatase. Insensitive to N-ethylmaleimide. Magnesium-independent phospholipid phosphatase of the plasma membrane that catalyzes the dephosphorylation of a variety of glycerolipid and sphingolipid phosphate esters including phosphatidate/PA, lysophosphatidate/LPA, diacylglycerol pyrophosphate/DGPP, sphingosine 1-phosphate/S1P and ceramide 1-phosphate/C1P. Also acts on N-oleoyl ethanolamine phosphate/N-(9Z-octadecenoyl)-ethanolamine phosphate, a potential physiological compound. Through its extracellular phosphatase activity allows both the hydrolysis and the cellular uptake of these bioactive lipid mediators from the milieu, regulating signal transduction in different cellular processes. It is for instance essential for the extracellular hydrolysis of S1P and subsequent conversion into intracellular S1P. Involved in the regulation of inflammation, platelets activation, cell proliferation and migration among other processes. May also have an intracellular activity to regulate phospholipid-mediated signaling pathways. The polypeptide is Phospholipid phosphatase 1 (Sus scrofa (Pig)).